A 429-amino-acid chain; its full sequence is 3-phosphoshikimate 1-carboxyvinyltransferase (429 aa).

The 3-phosphoshikimate site is built by Lys-23, Ser-24, and Arg-28. Position 23 (Lys-23) interacts with phosphoenolpyruvate. Phosphoenolpyruvate is bound by residues Gly-95 and Arg-123. 3-phosphoshikimate is bound by residues Ser-168, Gln-170, Asp-316, and Lys-343. Gln-170 serves as a coordination point for phosphoenolpyruvate. The active-site Proton acceptor is Asp-316. Residues Arg-347 and Arg-389 each contribute to the phosphoenolpyruvate site.

This sequence belongs to the EPSP synthase family. As to quaternary structure, monomer.

The protein resides in the cytoplasm. The catalysed reaction is 3-phosphoshikimate + phosphoenolpyruvate = 5-O-(1-carboxyvinyl)-3-phosphoshikimate + phosphate. The protein operates within metabolic intermediate biosynthesis; chorismate biosynthesis; chorismate from D-erythrose 4-phosphate and phosphoenolpyruvate: step 6/7. Its function is as follows. Catalyzes the transfer of the enolpyruvyl moiety of phosphoenolpyruvate (PEP) to the 5-hydroxyl of shikimate-3-phosphate (S3P) to produce enolpyruvyl shikimate-3-phosphate and inorganic phosphate. The chain is 3-phosphoshikimate 1-carboxyvinyltransferase from Bacillus anthracis (strain A0248).